The primary structure comprises 115 residues: SPbeta prophage-derived uncharacterized protein YoqS (115 aa).

This Bacillus subtilis (strain 168) protein is SPbeta prophage-derived uncharacterized protein YoqS (yoqS).